The following is a 129-amino-acid chain: Small ribosomal subunit protein uS11 (129 aa).

It belongs to the universal ribosomal protein uS11 family. Part of the 30S ribosomal subunit. Interacts with proteins S7 and S18. Binds to IF-3.

Functionally, located on the platform of the 30S subunit, it bridges several disparate RNA helices of the 16S rRNA. Forms part of the Shine-Dalgarno cleft in the 70S ribosome. This is Small ribosomal subunit protein uS11 from Mannheimia succiniciproducens (strain KCTC 0769BP / MBEL55E).